The sequence spans 384 residues: 1-deoxy-D-xylulose 5-phosphate reductoisomerase (384 aa).

Residues Thr-10, Gly-11, Ser-12, Ile-13, Asn-38, and Asn-120 each coordinate NADPH. Lys-121 serves as a coordination point for 1-deoxy-D-xylulose 5-phosphate. Glu-122 serves as a coordination point for NADPH. Asp-146 is a binding site for Mn(2+). Positions 147, 148, 172, and 195 each coordinate 1-deoxy-D-xylulose 5-phosphate. A Mn(2+)-binding site is contributed by Glu-148. Residue Gly-201 coordinates NADPH. The 1-deoxy-D-xylulose 5-phosphate site is built by Ser-208, Asn-213, Lys-214, and Glu-217. Residue Glu-217 coordinates Mn(2+).

This sequence belongs to the DXR family. Mg(2+) serves as cofactor. The cofactor is Mn(2+).

It catalyses the reaction 2-C-methyl-D-erythritol 4-phosphate + NADP(+) = 1-deoxy-D-xylulose 5-phosphate + NADPH + H(+). The protein operates within isoprenoid biosynthesis; isopentenyl diphosphate biosynthesis via DXP pathway; isopentenyl diphosphate from 1-deoxy-D-xylulose 5-phosphate: step 1/6. Its function is as follows. Catalyzes the NADPH-dependent rearrangement and reduction of 1-deoxy-D-xylulose-5-phosphate (DXP) to 2-C-methyl-D-erythritol 4-phosphate (MEP). This Protochlamydia amoebophila (strain UWE25) protein is 1-deoxy-D-xylulose 5-phosphate reductoisomerase.